The primary structure comprises 476 residues: Glutathione synthetase (476 aa).

Arg-117 is a binding site for substrate. Glu-137 provides a ligand contact to ATP. Positions 137 and 139 each coordinate Mg(2+). Substrate is bound by residues 141 to 144, 211 to 213, Gln-217, and 267 to 270; these read ISSS, ERN, and RAGY. Residues Lys-308, 367 to 376, Tyr-378, 400 to 403, and Glu-426 contribute to the ATP site; these read KPQREGGGNN and MDKI. Glu-371 contacts Mg(2+). Arg-452 provides a ligand contact to substrate. ATP is bound by residues Lys-454 and Glu-460. 463-464 is a substrate binding site; the sequence is VA.

The protein belongs to the eukaryotic GSH synthase family. Homodimer. Mg(2+) serves as cofactor.

The enzyme catalyses gamma-L-glutamyl-L-cysteine + glycine + ATP = glutathione + ADP + phosphate + H(+). It functions in the pathway sulfur metabolism; glutathione biosynthesis; glutathione from L-cysteine and L-glutamate: step 2/2. The sequence is that of Glutathione synthetase (gshB) from Dictyostelium discoideum (Social amoeba).